The primary structure comprises 269 residues: Monofunctional glycosyltransferase (269 aa).

A helical transmembrane segment spans residues 46–66 (ILLTILIIIALFIGIMYFLST).

It belongs to the glycosyltransferase 51 family.

The protein localises to the cell membrane. It carries out the reaction [GlcNAc-(1-&gt;4)-Mur2Ac(oyl-L-Ala-gamma-D-Glu-L-Lys-D-Ala-D-Ala)](n)-di-trans,octa-cis-undecaprenyl diphosphate + beta-D-GlcNAc-(1-&gt;4)-Mur2Ac(oyl-L-Ala-gamma-D-Glu-L-Lys-D-Ala-D-Ala)-di-trans,octa-cis-undecaprenyl diphosphate = [GlcNAc-(1-&gt;4)-Mur2Ac(oyl-L-Ala-gamma-D-Glu-L-Lys-D-Ala-D-Ala)](n+1)-di-trans,octa-cis-undecaprenyl diphosphate + di-trans,octa-cis-undecaprenyl diphosphate + H(+). Its pathway is cell wall biogenesis; peptidoglycan biosynthesis. Its function is as follows. Peptidoglycan polymerase that catalyzes glycan chain elongation using lipid-linked disaccharide-pentapeptide as the substrate. This Staphylococcus aureus (strain JH1) protein is Monofunctional glycosyltransferase.